Here is a 292-residue protein sequence, read N- to C-terminus: Zinc finger protein SNAI3 (292 aa).

Residues 1-20 (MPRSFLVKTHSSHRVPNYRR) form an SNAG domain region. 4 consecutive C2H2-type zinc fingers follow at residues 152 to 174 (FECF…RQLH), 183 to 205 (FTCK…IRTH), 209 to 231 (CTCK…VRTH), and 237 to 259 (YACS…LQTH). The C2H2-type 5; degenerate zinc finger occupies 265-287 (YRCRRCTKTFSRMSLLARHEESG).

It belongs to the snail C2H2-type zinc-finger protein family.

It is found in the nucleus. In terms of biological role, seems to inhibit myoblast differentiation. Transcriptional repressor of E-box-dependent transactivation of downstream myogenic bHLHs genes. Binds preferentially to the canonical E-box sequences 5'-CAGGTG-3' and 5'-CACCTG-3'. This is Zinc finger protein SNAI3 (SNAI3) from Homo sapiens (Human).